A 289-amino-acid polypeptide reads, in one-letter code: ATP synthase gamma chain (289 aa).

This sequence belongs to the ATPase gamma chain family. F-type ATPases have 2 components, CF(1) - the catalytic core - and CF(0) - the membrane proton channel. CF(1) has five subunits: alpha(3), beta(3), gamma(1), delta(1), epsilon(1). CF(0) has three main subunits: a, b and c.

Its subcellular location is the cell inner membrane. Its function is as follows. Produces ATP from ADP in the presence of a proton gradient across the membrane. The gamma chain is believed to be important in regulating ATPase activity and the flow of protons through the CF(0) complex. This chain is ATP synthase gamma chain, found in Coxiella burnetii (strain CbuK_Q154) (Coxiella burnetii (strain Q154)).